Consider the following 381-residue polypeptide: Na(+)/H(+) antiporter NhaA 1 (381 aa).

Helical transmembrane passes span 18 to 38 (GLLL…SYSA), 53 to 73 (ITHW…GLEL), 89 to 109 (SLPI…FLAL), 118 to 138 (GAGI…SLLG), 147 to 167 (VFLT…IAVF), 170 to 190 (TSIG…LFVL), 210 to 230 (YFML…AFVI), 251 to 271 (PVAF…AIES), 283 to 303 (FGII…FSSI), 321 to 341 (ILGA…ITLL), and 348 to 368 (IIVF…ITGF).

The protein belongs to the NhaA Na(+)/H(+) (TC 2.A.33) antiporter family.

The protein localises to the cell inner membrane. It carries out the reaction Na(+)(in) + 2 H(+)(out) = Na(+)(out) + 2 H(+)(in). Na(+)/H(+) antiporter that extrudes sodium in exchange for external protons. The sequence is that of Na(+)/H(+) antiporter NhaA 1 from Flavobacterium johnsoniae (strain ATCC 17061 / DSM 2064 / JCM 8514 / BCRC 14874 / CCUG 350202 / NBRC 14942 / NCIMB 11054 / UW101) (Cytophaga johnsonae).